The following is a 309-amino-acid chain: GTPase Era (309 aa).

An Era-type G domain is found at 16-186 (HAGFVAIVGK…REQILDALPE (171 aa)). Positions 24–31 (GKPNVGKS) are G1. Position 24–31 (24–31 (GKPNVGKS)) interacts with GTP. A G2 region spans residues 50-54 (QTTRR). The tract at residues 71-74 (DTPG) is G3. GTP is bound by residues 71–75 (DTPGL) and 133–136 (NKVD). The tract at residues 133-136 (NKVD) is G4. The G5 stretch occupies residues 164 to 166 (LSA). One can recognise a KH type-2 domain in the interval 217–294 (LREELPYAVA…FLGLEVIVIP (78 aa)).

The protein belongs to the TRAFAC class TrmE-Era-EngA-EngB-Septin-like GTPase superfamily. Era GTPase family. In terms of assembly, monomer.

It localises to the cytoplasm. It is found in the cell membrane. Functionally, an essential GTPase that binds both GDP and GTP, with rapid nucleotide exchange. Plays a role in 16S rRNA processing and 30S ribosomal subunit biogenesis and possibly also in cell cycle regulation and energy metabolism. This Deinococcus geothermalis (strain DSM 11300 / CIP 105573 / AG-3a) protein is GTPase Era.